A 239-amino-acid chain; its full sequence is Transcriptional regulatory protein DcuR (239 aa).

Residues 3 to 121 form the Response regulatory domain; the sequence is NVLIIDDDAM…RFEEALTGWR (119 aa). Asp56 carries the post-translational modification 4-aspartylphosphate. Positions 181-200 form a DNA-binding region, H-T-H motif; that stretch reads TDELANEVNISRVSCRKYLI.

Phosphorylated and activated by DcuS.

It is found in the cytoplasm. In terms of biological role, member of the two-component regulatory system DcuR/DcuS. Involved in the C4-dicarboxylate-stimulated regulation of the genes encoding the anaerobic fumarate respiratory system (frdABCD; nuoAN; dcuB; dcuC; sdhCDAB; etc.). Weakly regulates the aerobic C4-dicarboxylate transporter dctA. In Escherichia coli O6:H1 (strain CFT073 / ATCC 700928 / UPEC), this protein is Transcriptional regulatory protein DcuR (dcuR).